The chain runs to 102 residues: Large ribosomal subunit protein uL23 (102 aa).

Belongs to the universal ribosomal protein uL23 family. In terms of assembly, part of the 50S ribosomal subunit. Contacts protein L29, and trigger factor when it is bound to the ribosome.

One of the early assembly proteins it binds 23S rRNA. One of the proteins that surrounds the polypeptide exit tunnel on the outside of the ribosome. Forms the main docking site for trigger factor binding to the ribosome. The sequence is that of Large ribosomal subunit protein uL23 from Cutibacterium acnes (strain DSM 16379 / KPA171202) (Propionibacterium acnes).